The sequence spans 367 residues: Anthranilate phosphoribosyltransferase (367 aa).

A compositionally biased stretch (low complexity) spans 1-17 (MVLSSEASSAADHSAAA). A disordered region spans residues 1–22 (MVLSSEASSAADHSAAAPIPTS). 5-phospho-alpha-D-ribose 1-diphosphate-binding positions include G104, 107 to 108 (GD), T112, 114 to 117 (NLST), 132 to 140 (KHGNRAASS), and G144. Residue G104 coordinates anthranilate. A Mg(2+)-binding site is contributed by S116. Residue N135 participates in anthranilate binding. Residue R190 coordinates anthranilate. Mg(2+) is bound by residues D248 and E249.

This sequence belongs to the anthranilate phosphoribosyltransferase family. In terms of assembly, homodimer. The cofactor is Mg(2+).

It carries out the reaction N-(5-phospho-beta-D-ribosyl)anthranilate + diphosphate = 5-phospho-alpha-D-ribose 1-diphosphate + anthranilate. Its pathway is amino-acid biosynthesis; L-tryptophan biosynthesis; L-tryptophan from chorismate: step 2/5. Functionally, catalyzes the transfer of the phosphoribosyl group of 5-phosphorylribose-1-pyrophosphate (PRPP) to anthranilate to yield N-(5'-phosphoribosyl)-anthranilate (PRA). The chain is Anthranilate phosphoribosyltransferase from Mycobacterium marinum (strain ATCC BAA-535 / M).